The following is a 610-amino-acid chain: Phragmoplastin DRP1A (610 aa).

Met-1 carries the N-acetylmethionine modification. The Dynamin-type G domain maps to 31-300; that stretch reads WDSLPAIAVV…LERVIKSRIP (270 aa). The G1 motif stretch occupies residues 41–48; it reads GGQSSGKS. Residue 44-49 participates in GTP binding; it reads SSGKSS. The G2 motif stretch occupies residues 67–69; that stretch reads VTR. Positions 142-145 are G3 motif; that stretch reads DLPG. The segment at 211–214 is G4 motif; that stretch reads TKID. Residues 212 to 217 and 242 to 245 contribute to the GTP site; these read KIDLMD and NRSQ. Residues 241-244 are G5 motif; the sequence is VNRS. The 93-residue stretch at 518–610 folds into the GED domain; sequence LRRIGSNVLS…SEIDAVAWSK (93 aa).

It belongs to the TRAFAC class dynamin-like GTPase superfamily. Dynamin/Fzo/YdjA family. Forms homodimer and may homooligomerize and heterooligomerize to form the phragmoplastin complex. Interacts with AGD3/VAN3. May interact with CALS1. Binds to AHK2. Binds to SH3P2. Forms a complex made of SH3P2 and DRP1A and triggers its accumulation at the cell plate. Interacts with DRP2B at the plasma membrane and in forming clathrin-coated vesicles (CCV). Binds to PHIP1. Ubiquitous. Expressed in leaves (at protein level).

The protein resides in the cytoplasm. It localises to the cytoskeleton. The protein localises to the phragmoplast. It is found in the cell cortex. Its subcellular location is the cytoplasmic vesicle. The protein resides in the clathrin-coated vesicle. It localises to the cell membrane. It carries out the reaction GTP + H2O = GDP + phosphate + H(+). Its function is as follows. Microtubule-associated force-producing protein that is targeted to at the leading edges of the forming cell plate during cytokinesis. Also plays a major role in plasma membrane maintenance and cell wall integrity with implications in vesicular trafficking, polar cell expansion, vascular formation, and other aspects of plant growth and development, including stigmatic papillae expansion. Collaboratively with DRP2B, participates in clathrin-coated vesicle formation during endocytosis. Necessary for BOR1 polar localization in low-boron (B) conditions as well as for BOR1 endocytosis and subsequent degradation under high-concentration of boron. Has a GTPase activity. Required for the sterols-dependent dynamic high lipid order observed at the cell plate of dividing cells. Together with SH3P2, converts the fused vesicles to tubular structures at the cell plate and phragmoplasts during cytokinesis. With DRP2B and PIP5K3, required for the precise coordination of polar ARAC3/ROP6 and ARAC4/ROP2 placement and subsequent root hair positioning during planar polarity formation in root hair-forming cells, probably by mediating the correct basal-to-planar polarity switching of D6PK into the polar, lipid-enriched domain. Involved in endocytosis required for cellulose deposition during cell wall formation and elongation. Interacts with plasma membrane-mimetic liposomes and induces their clustering. This chain is Phragmoplastin DRP1A, found in Arabidopsis thaliana (Mouse-ear cress).